The primary structure comprises 510 residues: MTLLSRVLGLVRDVVIAHLIGAGAAADVFLFANRIPNFLRRLFAEGAFSQAFVPVLAEYQQSGDMNKTREFIGKVSGTLGGLVSIVTILAMVGSPHVAALFGMGWFTDWMNDGPDAHKFEQASLLLKITFPYLWFVTFVAFSGAVLNTIGKFGVMSFSPVLLNIAMIATALFLAPQMDNPDLALAIGIFLGGLLQFLFQIPFMKQAGLLVKPKWAWRDEGVTKIRKLMIPALFGVSVSQINLLLDTVIASFLMTGSISWLYYSDRLLEFPLGLFGIAISTVILPTLARHHVNREGDSAKSAVDFRNTMDWGVRMIFLLGVPAAIGIAVLAQPMLLTLFMRGNFMLNDVYAASYSLRAFNAGLLSFMLIKILANGYYARQDTKTPVKIGIIAMVSNMGFNLLAIPFSYVGLAIASAMSATLNAYLLYRGLAKADVYHFSRKSAVFFVKVLLAAIAMGAAVWYYVPEINQWAKMDFFMRVYWLVWLIVLAAIVYGATLILLGVRKHHLLTKN.

Helical transmembrane passes span Asp-13–Asn-33, Gly-81–Phe-101, Phe-130–Gly-150, Val-154–Ala-174, Leu-182–Phe-202, Ile-240–Leu-260, Leu-266–Leu-286, Ile-315–Leu-335, Ala-357–Ala-377, Met-396–Met-416, Val-443–Val-463, and Leu-481–Val-501.

This sequence belongs to the MurJ/MviN family.

The protein localises to the cell inner membrane. It participates in cell wall biogenesis; peptidoglycan biosynthesis. In terms of biological role, involved in peptidoglycan biosynthesis. Transports lipid-linked peptidoglycan precursors from the inner to the outer leaflet of the cytoplasmic membrane. This chain is Probable lipid II flippase MurJ, found in Haemophilus influenzae (strain ATCC 51907 / DSM 11121 / KW20 / Rd).